A 409-amino-acid polypeptide reads, in one-letter code: Tyrosine--tRNA ligase (409 aa).

The 'HIGH' region motif lies at 54-63 (PTAPDIHLGH). A 'KMSKS' region motif is present at residues 238 to 242 (KMSKS). Lysine 241 lines the ATP pocket. In terms of domain architecture, S4 RNA-binding spans 347-407 (QGILRILREA…GKRKFARVKL (61 aa)).

Belongs to the class-I aminoacyl-tRNA synthetase family. TyrS type 2 subfamily. Homodimer.

It is found in the cytoplasm. It carries out the reaction tRNA(Tyr) + L-tyrosine + ATP = L-tyrosyl-tRNA(Tyr) + AMP + diphosphate + H(+). Functionally, catalyzes the attachment of tyrosine to tRNA(Tyr) in a two-step reaction: tyrosine is first activated by ATP to form Tyr-AMP and then transferred to the acceptor end of tRNA(Tyr). The sequence is that of Tyrosine--tRNA ligase from Bordetella pertussis (strain Tohama I / ATCC BAA-589 / NCTC 13251).